The chain runs to 431 residues: Tol-Pal system protein TolB (431 aa).

The first 26 residues, 1 to 26 (MSLMTKLGFRALVASCLITAGSAANA), serve as a signal peptide directing secretion. Residues 406–431 (DGSAPPQILSVQGGSVREPSWGPFMQ) are disordered.

Belongs to the TolB family. As to quaternary structure, the Tol-Pal system is composed of five core proteins: the inner membrane proteins TolA, TolQ and TolR, the periplasmic protein TolB and the outer membrane protein Pal. They form a network linking the inner and outer membranes and the peptidoglycan layer.

It localises to the periplasm. Part of the Tol-Pal system, which plays a role in outer membrane invagination during cell division and is important for maintaining outer membrane integrity. In Burkholderia orbicola (strain MC0-3), this protein is Tol-Pal system protein TolB.